The sequence spans 451 residues: Phosphoglucosamine mutase (451 aa).

Ser102 (phosphoserine intermediate) is an active-site residue. 4 residues coordinate Mg(2+): Ser102, Asp242, Asp244, and Asp246. Ser102 carries the phosphoserine modification.

It belongs to the phosphohexose mutase family. Requires Mg(2+) as cofactor. Activated by phosphorylation.

It carries out the reaction alpha-D-glucosamine 1-phosphate = D-glucosamine 6-phosphate. In terms of biological role, catalyzes the conversion of glucosamine-6-phosphate to glucosamine-1-phosphate. The protein is Phosphoglucosamine mutase of Staphylococcus saprophyticus subsp. saprophyticus (strain ATCC 15305 / DSM 20229 / NCIMB 8711 / NCTC 7292 / S-41).